We begin with the raw amino-acid sequence, 88 residues long: Small ribosomal subunit protein bS16 (88 aa).

Belongs to the bacterial ribosomal protein bS16 family.

The chain is Small ribosomal subunit protein bS16 from Symbiobacterium thermophilum (strain DSM 24528 / JCM 14929 / IAM 14863 / T).